The following is a 323-amino-acid chain: MTKSAKIGVLLANLGTPDSPTPKSISRYLWQFLTDPRVVDLPRCKWYPLLKAIILPLRSKRIAKNYQAIWTEQGSPLLAISRQQKDALQAYLDTQNINAQVEIAMTYGNPSIQSTVKNLLKNQVERIIVLPLYPQYSSSTTGAVFDAFANALKEERGLVPFDFIHSYHIDENYINALANSIKVRLKSDEFLLFSYHGIPLRYEKMGDYYREHCKQTTIAVVNKLGLTENQWGMTFQSRFGREEWLQPYTDKFLESAATQNIQKIAVICPGFSVDCLETIEEIDKENRENFLTNGGQSYQYIPALNVEHTHIEMMGKLILEKLA.

The Fe cation site is built by H196 and E277.

Belongs to the ferrochelatase family.

The protein resides in the cytoplasm. It catalyses the reaction heme b + 2 H(+) = protoporphyrin IX + Fe(2+). It functions in the pathway porphyrin-containing compound metabolism; protoheme biosynthesis; protoheme from protoporphyrin-IX: step 1/1. Catalyzes the ferrous insertion into protoporphyrin IX. This Haemophilus influenzae (strain 86-028NP) protein is Ferrochelatase.